Here is a 265-residue protein sequence, read N- to C-terminus: NAD kinase (265 aa).

Aspartate 45 functions as the Proton acceptor in the catalytic mechanism. NAD(+) contacts are provided by residues 45–46 (DG), 121–122 (NE), arginine 147, aspartate 149, 160–165 (TAYSKS), alanine 184, and glutamine 222.

It belongs to the NAD kinase family. A divalent metal cation is required as a cofactor.

It is found in the cytoplasm. The catalysed reaction is NAD(+) + ATP = ADP + NADP(+) + H(+). In terms of biological role, involved in the regulation of the intracellular balance of NAD and NADP, and is a key enzyme in the biosynthesis of NADP. Catalyzes specifically the phosphorylation on 2'-hydroxyl of the adenosine moiety of NAD to yield NADP. This is NAD kinase from Lacticaseibacillus paracasei (strain ATCC 334 / BCRC 17002 / CCUG 31169 / CIP 107868 / KCTC 3260 / NRRL B-441) (Lactobacillus paracasei).